A 255-amino-acid polypeptide reads, in one-letter code: ATP synthase subunit a (255 aa).

The propeptide at 1-7 (MMFNNII) is removed in mature form. The next 6 helical transmembrane spans lie at 35-55 (FGFYIIISTIIILTLHLLITY), 91-111 (YFPFIYGLFIFILMNNLLGLI), 120-140 (HFILTFFISFTVVLGATILGF), 147-167 (FFSLFVPSGCPLGLLPLLVLI), 177-197 (VSLGLRLSANILSGHMLLVIL), and 208-228 (GIFYFLIGLIPLAFIFAFSGL).

Belongs to the ATPase A chain family. In terms of assembly, F-type ATPases have 2 components, CF(1) - the catalytic core - and CF(0) - the membrane proton channel. CF(1) has five subunits: alpha(3), beta(3), gamma(1), delta(1), epsilon(1). CF(0) has three main subunits: a, b and c.

The protein resides in the mitochondrion inner membrane. Mitochondrial membrane ATP synthase (F(1)F(0) ATP synthase or Complex V) produces ATP from ADP in the presence of a proton gradient across the membrane which is generated by electron transport complexes of the respiratory chain. F-type ATPases consist of two structural domains, F(1) - containing the extramembraneous catalytic core and F(0) - containing the membrane proton channel, linked together by a central stalk and a peripheral stalk. During catalysis, ATP synthesis in the catalytic domain of F(1) is coupled via a rotary mechanism of the central stalk subunits to proton translocation. Key component of the proton channel; it may play a direct role in the translocation of protons across the membrane. This chain is ATP synthase subunit a (ATP6), found in Trichophyton rubrum (Athlete's foot fungus).